The chain runs to 270 residues: Autophagy protein 5 (270 aa).

Lysine 144 participates in a covalent cross-link: Glycyl lysine isopeptide (Lys-Gly) (interchain with G-Cter in ATG12).

It belongs to the ATG5 family. Conjugated with ATG12. In terms of processing, conjugated to ATG12; which is essential for autophagy.

The protein resides in the preautophagosomal structure membrane. Functionally, involved in cytoplasm to vacuole transport (Cvt) and autophagic vesicle formation. Autophagy is essential for maintenance of amino acid levels and protein synthesis under nitrogen starvation. Required for selective autophagic degradation of the nucleus (nucleophagy). Also required for mitophagy, which eliminates defective or superfluous mitochondria in order to fulfill cellular energy requirements and prevent excess ROS production. Conjugation with ATG12, through a ubiquitin-like conjugating system involving ATG7 as an E1-like activating enzyme and ATG10 as an E2-like conjugating enzyme, is essential for its function. The ATG12-ATG5 conjugate acts as an E3-like enzyme which is required for lipidation of ATG8 and ATG8 association to the vesicle membranes. This is Autophagy protein 5 (ATG5) from Candida glabrata (strain ATCC 2001 / BCRC 20586 / JCM 3761 / NBRC 0622 / NRRL Y-65 / CBS 138) (Yeast).